A 173-amino-acid polypeptide reads, in one-letter code: Alpha-crystallin A chain (173 aa).

N-acetylmethionine is present on Met-1. The segment at 1 to 63 (MDVTIQHPWF…RTVLDSGISE (63 aa)) is required for complex formation with BFSP1 and BFSP2; during homooligomerization, mediates the association of 2 dimers to form a tetramer. Gln-6 is modified (deamidated glutamine; partial). A Phosphoserine modification is found at Ser-45. Gln-50 bears the Deamidated glutamine; partial mark. The 113-residue stretch at 52 to 164 (LFRTVLDSGI…AERAIPVSRE (113 aa)) folds into the sHSP domain. Lys-70 bears the N6-acetyllysine mark. Gln-90 is modified (deamidated glutamine; partial). Position 99 is an N6-acetyllysine (Lys-99). His-100 is a Zn(2+) binding site. Asn-101 is modified (deamidated asparagine; partial). Zn(2+) contacts are provided by Glu-102 and His-107. The residue at position 122 (Ser-122) is a Phosphoserine. Asn-123 carries the post-translational modification Deamidated asparagine; partial. Cysteines 131 and 142 form a disulfide. Gln-147 is modified (deamidated glutamine; partial). Residue His-154 participates in Zn(2+) binding. Ser-162 carries an O-linked (GlcNAc) serine glycan.

Belongs to the small heat shock protein (HSP20) family. In terms of assembly, heteropolymer composed of three CRYAA and one CRYAB subunits. Inter-subunit bridging via zinc ions enhances stability, which is crucial as there is no protein turn over in the lens. Can also form homodimers and homotetramers (dimers of dimers) which serve as the building blocks of homooligomers. Within homooligomers, the zinc-binding motif is created from residues of 3 different molecules. His-100 and Glu-102 from one molecule are ligands of the zinc ion, and His-107 and His-154 residues from additional molecules complete the site with tetrahedral coordination geometry. Part of a complex required for lens intermediate filament formation composed of BFSP1, BFSP2 and CRYAA. Post-translationally, O-glycosylated; contains N-acetylglucosamine side chains. In terms of processing, deamidation of Asn-101 in lens occurs mostly during the first 30 years of age, followed by a small additional amount of deamidation (approximately 5%) during the next approximately 38 years, resulting in a maximum of approximately 50% deamidation during the lifetime of the individual. Phosphorylation on Ser-122 seems to be developmentally regulated. Absent in the first months of life, it appears during the first 12 years of human lifetime. The relative amount of phosphorylated form versus unphosphorylated form does not change over the lifetime of the individual. Post-translationally, acetylation at Lys-70 may increase chaperone activity. In terms of processing, undergoes age-dependent proteolytical cleavage at the C-terminus. Alpha-crystallin A(1-172) is the most predominant form produced most rapidly during the first 12 years of age and after this age is present in approximately 50% of the lens molecules. In young individuals and during the first approximately 30 years of life, less than half molecules contain an intramolecular disulfide bond (oxidized form), while in the remaining fraction the cysteines are in the free sulfhydryl form (reduced form). With aging, the amount of oxidized form increases up to 90% and it becomes a major constituent of high molecular weight aggregates, concomitant with an age-dependent loss of its chaperone activity. The reduced form is undetectable in cataractous lenses. Expressed in the eye lens (at protein level).

The protein resides in the cytoplasm. It is found in the nucleus. Contributes to the transparency and refractive index of the lens. In its oxidized form (absence of intramolecular disulfide bond), acts as a chaperone, preventing aggregation of various proteins under a wide range of stress conditions. Required for the correct formation of lens intermediate filaments as part of a complex composed of BFSP1, BFSP2 and CRYAA. The protein is Alpha-crystallin A chain (CRYAA) of Homo sapiens (Human).